Reading from the N-terminus, the 523-residue chain is Alanine aminotransferase 2 (523 aa).

Residues M1–S25 are disordered. Pyridoxal 5'-phosphate is bound by residues A187, S188, Y216, N271, and S338. K341 bears the N6-(pyridoxal phosphate)lysine mark. Pyridoxal 5'-phosphate is bound at residue R350. An N6-acetyllysine mark is found at K415, K505, and K512.

It belongs to the class-I pyridoxal-phosphate-dependent aminotransferase family. Alanine aminotransferase subfamily. As to quaternary structure, homodimer. The cofactor is pyridoxal 5'-phosphate. Expressed at high levels in muscle, adipose tissue, kidney and brain and at lower levels in the liver and breast.

It catalyses the reaction L-alanine + 2-oxoglutarate = pyruvate + L-glutamate. It functions in the pathway amino-acid degradation; L-alanine degradation via transaminase pathway; pyruvate from L-alanine: step 1/1. Catalyzes the reversible transamination between alanine and 2-oxoglutarate to form pyruvate and glutamate. In Homo sapiens (Human), this protein is Alanine aminotransferase 2 (GPT2).